The sequence spans 107 residues: Phosphoribosyl-ATP pyrophosphatase (107 aa).

The protein belongs to the PRA-PH family.

It localises to the cytoplasm. It catalyses the reaction 1-(5-phospho-beta-D-ribosyl)-ATP + H2O = 1-(5-phospho-beta-D-ribosyl)-5'-AMP + diphosphate + H(+). Its pathway is amino-acid biosynthesis; L-histidine biosynthesis; L-histidine from 5-phospho-alpha-D-ribose 1-diphosphate: step 2/9. This Bacillus cereus (strain Q1) protein is Phosphoribosyl-ATP pyrophosphatase.